Reading from the N-terminus, the 325-residue chain is Elongation factor P--(R)-beta-lysine ligase (325 aa).

Substrate is bound at residue 76–78 (SPE). ATP-binding positions include 100–102 (RNE) and asparagine 109. Tyrosine 118 is a binding site for substrate. 244–245 (EL) provides a ligand contact to ATP. Glutamate 251 provides a ligand contact to substrate. Glycine 300 serves as a coordination point for ATP.

This sequence belongs to the class-II aminoacyl-tRNA synthetase family. EpmA subfamily. In terms of assembly, homodimer.

The catalysed reaction is D-beta-lysine + L-lysyl-[protein] + ATP = N(6)-((3R)-3,6-diaminohexanoyl)-L-lysyl-[protein] + AMP + diphosphate + H(+). Its function is as follows. With EpmB is involved in the beta-lysylation step of the post-translational modification of translation elongation factor P (EF-P). Catalyzes the ATP-dependent activation of (R)-beta-lysine produced by EpmB, forming a lysyl-adenylate, from which the beta-lysyl moiety is then transferred to the epsilon-amino group of a conserved specific lysine residue in EF-P. In Klebsiella pneumoniae (strain 342), this protein is Elongation factor P--(R)-beta-lysine ligase.